The primary structure comprises 354 residues: 3-isopropylmalate dehydrogenase (354 aa).

76–87 (GPRWDGAKERPE) contacts NAD(+). R94, R104, R130, and D215 together coordinate substrate. Mg(2+) is bound by residues D215, D239, and D243. 273-285 (GSAPDIAGKNKAN) is a binding site for NAD(+).

The protein belongs to the isocitrate and isopropylmalate dehydrogenases family. LeuB type 1 subfamily. In terms of assembly, homodimer. Mg(2+) serves as cofactor. Mn(2+) is required as a cofactor.

It is found in the cytoplasm. The catalysed reaction is (2R,3S)-3-isopropylmalate + NAD(+) = 4-methyl-2-oxopentanoate + CO2 + NADH. It participates in amino-acid biosynthesis; L-leucine biosynthesis; L-leucine from 3-methyl-2-oxobutanoate: step 3/4. Functionally, catalyzes the oxidation of 3-carboxy-2-hydroxy-4-methylpentanoate (3-isopropylmalate) to 3-carboxy-4-methyl-2-oxopentanoate. The product decarboxylates to 4-methyl-2 oxopentanoate. This Bacillus cereus (strain ZK / E33L) protein is 3-isopropylmalate dehydrogenase.